Consider the following 561-residue polypeptide: Small ribosomal subunit protein bS1 (561 aa).

S1 motif domains are found at residues 22 to 88 (GEVI…LSRE), 106 to 172 (GDIL…VSRR), 193 to 261 (GSVI…LGMK), 278 to 348 (GTRL…LGMK), 365 to 435 (GDKI…LGIK), and 452 to 521 (GSLV…LSVK).

The protein belongs to the bacterial ribosomal protein bS1 family.

Its function is as follows. Binds mRNA; thus facilitating recognition of the initiation point. It is needed to translate mRNA with a short Shine-Dalgarno (SD) purine-rich sequence. The polypeptide is Small ribosomal subunit protein bS1 (rpsA) (Neisseria meningitidis serogroup B (strain ATCC BAA-335 / MC58)).